The following is a 314-amino-acid chain: Methionyl-tRNA formyltransferase (314 aa).

113 to 116 (SLLP) lines the (6S)-5,6,7,8-tetrahydrofolate pocket.

This sequence belongs to the Fmt family.

It carries out the reaction L-methionyl-tRNA(fMet) + (6R)-10-formyltetrahydrofolate = N-formyl-L-methionyl-tRNA(fMet) + (6S)-5,6,7,8-tetrahydrofolate + H(+). In terms of biological role, attaches a formyl group to the free amino group of methionyl-tRNA(fMet). The formyl group appears to play a dual role in the initiator identity of N-formylmethionyl-tRNA by promoting its recognition by IF2 and preventing the misappropriation of this tRNA by the elongation apparatus. This chain is Methionyl-tRNA formyltransferase, found in Chlorobaculum tepidum (strain ATCC 49652 / DSM 12025 / NBRC 103806 / TLS) (Chlorobium tepidum).